The chain runs to 251 residues: Triosephosphate isomerase (251 aa).

Substrate contacts are provided by asparagine 10 and lysine 12. Histidine 96 functions as the Electrophile in the catalytic mechanism. Glutamate 168 (proton acceptor) is an active-site residue.

The protein belongs to the triosephosphate isomerase family. Homodimer.

The catalysed reaction is D-glyceraldehyde 3-phosphate = dihydroxyacetone phosphate. It functions in the pathway carbohydrate biosynthesis; gluconeogenesis. Its pathway is carbohydrate degradation; glycolysis; D-glyceraldehyde 3-phosphate from glycerone phosphate: step 1/1. This chain is Triosephosphate isomerase (tpiA), found in Aspergillus oryzae (strain ATCC 42149 / RIB 40) (Yellow koji mold).